A 469-amino-acid chain; its full sequence is Glutamate--tRNA ligase (469 aa).

The 'HIGH' region signature appears at 11 to 21 (PSPTGFIHLGN). Positions 243 to 247 (KMSKR) match the 'KMSKS' region motif. K246 is an ATP binding site.

Belongs to the class-I aminoacyl-tRNA synthetase family. Glutamate--tRNA ligase type 1 subfamily. Monomer.

The protein localises to the cytoplasm. It catalyses the reaction tRNA(Glu) + L-glutamate + ATP = L-glutamyl-tRNA(Glu) + AMP + diphosphate. Catalyzes the attachment of glutamate to tRNA(Glu) in a two-step reaction: glutamate is first activated by ATP to form Glu-AMP and then transferred to the acceptor end of tRNA(Glu). The sequence is that of Glutamate--tRNA ligase from Burkholderia cenocepacia (strain ATCC BAA-245 / DSM 16553 / LMG 16656 / NCTC 13227 / J2315 / CF5610) (Burkholderia cepacia (strain J2315)).